The sequence spans 380 residues: Putative RNA ligase (380 aa).

Functionally, putative RNA ligase. Is able to catalyze the adenylation reaction of ssDNA 3'-terminal phosphate (ssDNA 3'p) to 3'-adenylated DNA (ssDNA 3'pp5'A). This chain is Putative RNA ligase, found in Thermovibrio ammonificans (strain DSM 15698 / JCM 12110 / HB-1).